A 132-amino-acid chain; its full sequence is Small ribosomal subunit protein uS8c (132 aa).

Belongs to the universal ribosomal protein uS8 family. As to quaternary structure, part of the 30S ribosomal subunit.

It is found in the plastid. The protein resides in the chloroplast. Functionally, one of the primary rRNA binding proteins, it binds directly to 16S rRNA central domain where it helps coordinate assembly of the platform of the 30S subunit. The chain is Small ribosomal subunit protein uS8c (rps8) from Marchantia polymorpha (Common liverwort).